A 136-amino-acid chain; its full sequence is uncharacterized protein (136 aa).

This sequence to E.coli YcgX and YdfO.

This is an uncharacterized protein from Escherichia coli (strain K12).